The primary structure comprises 94 residues: Co-chaperonin GroES (94 aa).

Belongs to the GroES chaperonin family. In terms of assembly, heptamer of 7 subunits arranged in a ring. Interacts with the chaperonin GroEL.

Its subcellular location is the cytoplasm. In terms of biological role, together with the chaperonin GroEL, plays an essential role in assisting protein folding. The GroEL-GroES system forms a nano-cage that allows encapsulation of the non-native substrate proteins and provides a physical environment optimized to promote and accelerate protein folding. GroES binds to the apical surface of the GroEL ring, thereby capping the opening of the GroEL channel. The protein is Co-chaperonin GroES of Halalkalibacterium halodurans (strain ATCC BAA-125 / DSM 18197 / FERM 7344 / JCM 9153 / C-125) (Bacillus halodurans).